We begin with the raw amino-acid sequence, 347 residues long: GMP reductase (347 aa).

108–131 (ADFEKTVQILALNPALNFVCIDVA) provides a ligand contact to NADP(+). K(+)-binding residues include G181 and G183. Catalysis depends on C186, which acts as the Thioimidate intermediate. 216–239 (IVSDGGCTMPGDVAKAFGGGADFV) is a binding site for NADP(+).

It belongs to the IMPDH/GMPR family. GuaC type 1 subfamily. As to quaternary structure, homotetramer.

It catalyses the reaction IMP + NH4(+) + NADP(+) = GMP + NADPH + 2 H(+). In terms of biological role, catalyzes the irreversible NADPH-dependent deamination of GMP to IMP. It functions in the conversion of nucleobase, nucleoside and nucleotide derivatives of G to A nucleotides, and in maintaining the intracellular balance of A and G nucleotides. This Salmonella paratyphi A (strain ATCC 9150 / SARB42) protein is GMP reductase.